An 880-amino-acid chain; its full sequence is Valine--tRNA ligase (880 aa).

The short motif at 46–56 (PNVTGKLHLGH) is the 'HIGH' region element. Residues 520 to 524 (KMSKS) carry the 'KMSKS' region motif. Lysine 523 serves as a coordination point for ATP. Residues 808–880 (LAGLINIEEE…KARIAELKEN (73 aa)) adopt a coiled-coil conformation.

It belongs to the class-I aminoacyl-tRNA synthetase family. ValS type 1 subfamily. Monomer.

The protein resides in the cytoplasm. The catalysed reaction is tRNA(Val) + L-valine + ATP = L-valyl-tRNA(Val) + AMP + diphosphate. In terms of biological role, catalyzes the attachment of valine to tRNA(Val). As ValRS can inadvertently accommodate and process structurally similar amino acids such as threonine, to avoid such errors, it has a 'posttransfer' editing activity that hydrolyzes mischarged Thr-tRNA(Val) in a tRNA-dependent manner. The sequence is that of Valine--tRNA ligase from Lactococcus lactis subsp. lactis (strain IL1403) (Streptococcus lactis).